A 128-amino-acid chain; its full sequence is MHARKLIVVLVYILTVLVSVAVSKRYTSEKRVQNLATFKTMMRYGRGGPSPNNKENKVNIRPRADAFFLGPRYGKRSGWSPNASLVYPVSTPLCGLDEDLSCAYTGISDLYRCTPRKGESEEFTTSSN.

The N-terminal stretch at 1-23 (MHARKLIVVLVYILTVLVSVAVS) is a signal peptide. A propeptide spanning residues 26 to 29 (YTSE) is cleaved from the precursor. At tyrosine 44 the chain carries Tyrosine amide. Residues 47-63 (GGPSPNNKENKVNIRPR) constitute a propeptide that is removed on maturation. Residue tyrosine 73 is modified to Tyrosine amide. The propeptide occupies 77 to 128 (SGWSPNASLVYPVSTPLCGLDEDLSCAYTGISDLYRCTPRKGESEEFTTSSN).

The protein localises to the secreted. Functionally, neuropeptides RYamide-1 and RYamide-2 are ligands for the G-protein coupled receptor RYa-R. RYamide-2 is the most potent activator of RYa-R. The chain is RYamide neuropeptides from Tribolium castaneum (Red flour beetle).